A 354-amino-acid chain; its full sequence is Methionine import ATP-binding protein MetN (354 aa).

The 243-residue stretch at 8 to 250 (LDHIDITFHQ…PKEALTQEFI (243 aa)) folds into the ABC transporter domain. 42 to 49 (GYSGAGKS) is a binding site for ATP.

Belongs to the ABC transporter superfamily. Methionine importer (TC 3.A.1.24) family. As to quaternary structure, the complex is composed of two ATP-binding proteins (MetN), two transmembrane proteins (MetI) and a solute-binding protein (MetQ).

It is found in the cell membrane. It catalyses the reaction L-methionine(out) + ATP + H2O = L-methionine(in) + ADP + phosphate + H(+). It carries out the reaction D-methionine(out) + ATP + H2O = D-methionine(in) + ADP + phosphate + H(+). Its function is as follows. Part of the ABC transporter complex MetNIQ involved in methionine import. Responsible for energy coupling to the transport system. The sequence is that of Methionine import ATP-binding protein MetN from Streptococcus pyogenes serotype M4 (strain MGAS10750).